The chain runs to 128 residues: Fluoride-specific ion channel FluC 2 (128 aa).

Transmembrane regions (helical) follow at residues 13–35 (ALVA…AIAG), 40–59 (LAAN…EAAA), 71–93 (LLGT…TAGL), and 97–119 (WMAA…GRAI).

This sequence belongs to the fluoride channel Fluc/FEX (TC 1.A.43) family.

It localises to the cell membrane. The catalysed reaction is fluoride(in) = fluoride(out). Functionally, fluoride-specific ion channel. Important for reducing fluoride concentration in the cell, thus reducing its toxicity. The polypeptide is Fluoride-specific ion channel FluC 2 (Halobacterium salinarum (strain ATCC 700922 / JCM 11081 / NRC-1) (Halobacterium halobium)).